Here is a 256-residue protein sequence, read N- to C-terminus: Carboxysome shell protein CsoS1D (256 aa).

Residues 1–24 form a disordered region; that stretch reads MEPTSSLNRGDRKKGSSLVTGSEV. 2 consecutive BMC circularly permuted domains span residues 55 to 157 and 158 to 256; these read ELRT…RTKP and STSW…ISNY. The Gates the pore motif lies at 120 to 121; sequence ER.

Belongs to the EutL/PduB family. As to quaternary structure, homotrimer. Forms a dimer of stacked trimers, the same faces interact. A CsoS1-CsoS1D-CsoS2 complex can be isolated following expression in E.coli.

Its subcellular location is the carboxysome. Functionally, part of the carboxysome shell, a polyhedral inclusion where RuBisCO (ribulose bisphosphate carboxylase, cbbL-cbbS) is sequestered. It may control transport of RuBisCO reactants in and out of the carboxysome. There are estimated to be 6 CsoS1D hexamers per carboxysome. This chain is Carboxysome shell protein CsoS1D, found in Prochlorococcus marinus subsp. pastoris (strain CCMP1986 / NIES-2087 / MED4).